Consider the following 622-residue polypeptide: 1,4-alpha-glucan branching enzyme GlgB (622 aa).

Catalysis depends on Asp300, which acts as the Nucleophile. The active-site Proton donor is the Glu351.

The protein belongs to the glycosyl hydrolase 13 family. GlgB subfamily. Monomer.

It catalyses the reaction Transfers a segment of a (1-&gt;4)-alpha-D-glucan chain to a primary hydroxy group in a similar glucan chain.. It participates in glycan biosynthesis; glycogen biosynthesis. Its function is as follows. Catalyzes the formation of the alpha-1,6-glucosidic linkages in glycogen by scission of a 1,4-alpha-linked oligosaccharide from growing alpha-1,4-glucan chains and the subsequent attachment of the oligosaccharide to the alpha-1,6 position. This chain is 1,4-alpha-glucan branching enzyme GlgB, found in Streptococcus agalactiae serotype III (strain NEM316).